The chain runs to 325 residues: ATP phosphoribosyltransferase (325 aa).

This sequence belongs to the ATP phosphoribosyltransferase family. Long subfamily. Mg(2+) is required as a cofactor.

It localises to the cytoplasm. It catalyses the reaction 1-(5-phospho-beta-D-ribosyl)-ATP + diphosphate = 5-phospho-alpha-D-ribose 1-diphosphate + ATP. It participates in amino-acid biosynthesis; L-histidine biosynthesis; L-histidine from 5-phospho-alpha-D-ribose 1-diphosphate: step 1/9. Its activity is regulated as follows. Feedback inhibited by histidine. Its function is as follows. Catalyzes the condensation of ATP and 5-phosphoribose 1-diphosphate to form N'-(5'-phosphoribosyl)-ATP (PR-ATP). Has a crucial role in the pathway because the rate of histidine biosynthesis seems to be controlled primarily by regulation of HisG enzymatic activity. This chain is ATP phosphoribosyltransferase, found in Rhodopseudomonas palustris (strain BisB18).